The following is a 277-amino-acid chain: Phosphatidylglycerol--prolipoprotein diacylglyceryl transferase (277 aa).

A run of 3 helical transmembrane segments spans residues 16–36 (FFQIHWYGLTYLAAFGLFYFL), 62–82 (LLFFGVVGVILGGRLGYVLFY), and 101–121 (GMAFHGGLLGVIVAMALFAHL). R145 provides a ligand contact to a 1,2-diacyl-sn-glycero-3-phospho-(1'-sn-glycerol). 2 helical membrane passes run 214-234 (PIWGRVSGLFVGGYGVFRFIA) and 243-263 (FLGLLAFNLSMGQWLCVPMIV).

Belongs to the Lgt family.

It is found in the cell inner membrane. The enzyme catalyses L-cysteinyl-[prolipoprotein] + a 1,2-diacyl-sn-glycero-3-phospho-(1'-sn-glycerol) = an S-1,2-diacyl-sn-glyceryl-L-cysteinyl-[prolipoprotein] + sn-glycerol 1-phosphate + H(+). The protein operates within protein modification; lipoprotein biosynthesis (diacylglyceryl transfer). Its function is as follows. Catalyzes the transfer of the diacylglyceryl group from phosphatidylglycerol to the sulfhydryl group of the N-terminal cysteine of a prolipoprotein, the first step in the formation of mature lipoproteins. This is Phosphatidylglycerol--prolipoprotein diacylglyceryl transferase from Leptothrix cholodnii (strain ATCC 51168 / LMG 8142 / SP-6) (Leptothrix discophora (strain SP-6)).